Reading from the N-terminus, the 160-residue chain is SsrA-binding protein (160 aa).

Belongs to the SmpB family.

It localises to the cytoplasm. Required for rescue of stalled ribosomes mediated by trans-translation. Binds to transfer-messenger RNA (tmRNA), required for stable association of tmRNA with ribosomes. tmRNA and SmpB together mimic tRNA shape, replacing the anticodon stem-loop with SmpB. tmRNA is encoded by the ssrA gene; the 2 termini fold to resemble tRNA(Ala) and it encodes a 'tag peptide', a short internal open reading frame. During trans-translation Ala-aminoacylated tmRNA acts like a tRNA, entering the A-site of stalled ribosomes, displacing the stalled mRNA. The ribosome then switches to translate the ORF on the tmRNA; the nascent peptide is terminated with the 'tag peptide' encoded by the tmRNA and targeted for degradation. The ribosome is freed to recommence translation, which seems to be the essential function of trans-translation. The polypeptide is SsrA-binding protein (Pectobacterium atrosepticum (strain SCRI 1043 / ATCC BAA-672) (Erwinia carotovora subsp. atroseptica)).